A 128-amino-acid chain; its full sequence is uncharacterized protein (128 aa).

Positions K2–M127 constitute a VOC domain. Residues E48 and E123 each contribute to the Ni(2+) site.

It belongs to the glyoxalase I family.

This is an uncharacterized protein from Bacillus subtilis (strain 168).